The primary structure comprises 274 residues: Large ribosomal subunit protein uL2cz/uL2cy (274 aa).

A disordered region spans residues 224–252 (NPVDHPHGGGEGRAPIGRKKPVTPWGYPA).

Belongs to the universal ribosomal protein uL2 family. Part of the 50S ribosomal subunit.

Its subcellular location is the plastid. It localises to the chloroplast. The chain is Large ribosomal subunit protein uL2cz/uL2cy (rpl2-A) from Capsella bursa-pastoris (Shepherd's purse).